Reading from the N-terminus, the 301-residue chain is Mitochondrial ornithine transporter 1 (301 aa).

A run of 6 helical transmembrane segments spans residues 5-25 (PAIQ…ACVL), 68-88 (SPAL…YGFC), 110-130 (AAAG…TELV), 168-188 (GFYH…FFFF), 207-227 (LGPV…WLAV), and 237-257 (IQVL…LSIV). Solcar repeat units lie at residues 7–91 (IQAA…CQQV), 104–197 (LSDL…SRSF), and 207–293 (LGPV…SRKL).

It belongs to the mitochondrial carrier (TC 2.A.29) family. Widely expressed, with highest levels in the liver, testis and kidney. In the brain, expressed at high levels in the hypothalamus.

Its subcellular location is the mitochondrion inner membrane. It localises to the mitochondrion membrane. It carries out the reaction L-citrulline(in) + L-ornithine(out) + H(+)(in) = L-citrulline(out) + L-ornithine(in) + H(+)(out). The catalysed reaction is L-ornithine(in) + L-arginine(out) = L-ornithine(out) + L-arginine(in). The enzyme catalyses L-ornithine(out) + L-lysine(in) = L-ornithine(in) + L-lysine(out). It catalyses the reaction L-lysine(out) + H(+)(in) = L-lysine(in) + H(+)(out). It carries out the reaction L-ornithine(out) + H(+)(in) = L-ornithine(in) + H(+)(out). Its activity is regulated as follows. Inhibited by pyridoxal 5'-phosphate as well as by mercurials (mersalyl, p-chloromercuribenzene sulfonate, and mercuric chloride), N-ethylmaleimide and spermine. In terms of biological role, mitochondrial ornithine-citrulline antiporter. Catalyzes the exchange between cytosolic ornithine and mitochondrial citrulline plus an H(+), the proton compensates the positive charge of ornithine thus leading to an electroneutral transport. Plays a crucial role in the urea cycle, by connecting the cytosolic and the intramitochondrial reactions of the urea cycle. Lysine and arginine are also transported by the antiport mechanism. In addition, catalyzes an electroneutral exchange of ornithine or lysine for H(+), a reaction driven by the pH gradient across the inner membrane. This Mus musculus (Mouse) protein is Mitochondrial ornithine transporter 1.